A 221-amino-acid chain; its full sequence is MANEEVILLDFWPSMFGMRLRIALAEKEIKYEYKQEDLRNKSPLLLQMNPIHKKIPVLIHNGKPICESIIAVEYIEEVWKDKAPSLLPSDPYDRAQARFWADYIDKKLYDFGRKLWATKGEEQEAAKKDFIECLKVLEGALGDRPYFGGESFGFVDIALIGFYSWFYAYETFGNFSTEAECPKFVAWAKRCMQRESVAKSLPDQPKVLEFVKVLRQKFGLE.

Residues 4–83 (EEVILLDFWP…YIEEVWKDKA (80 aa)) enclose the GST N-terminal domain. Glutathione-binding positions include Ser-14, Lys-41, Ile-55, and 67-68 (ES). In terms of domain architecture, GST C-terminal spans 90-214 (DPYDRAQARF…PKVLEFVKVL (125 aa)).

It belongs to the GST superfamily. Phi family. As to expression, abundant in seedlings and roots. It is also found in the shoot tips, flowers and leaves.

It catalyses the reaction RX + glutathione = an S-substituted glutathione + a halide anion + H(+). Conjugation of reduced glutathione to a wide number of exogenous and endogenous hydrophobic electrophiles. This is Probable glutathione S-transferase parC (PARC) from Nicotiana tabacum (Common tobacco).